The primary structure comprises 364 residues: Alanine racemase (364 aa).

K35 acts as the Proton acceptor; specific for D-alanine in catalysis. K35 bears the N6-(pyridoxal phosphate)lysine mark. Residue R131 participates in substrate binding. Y256 (proton acceptor; specific for L-alanine) is an active-site residue. M304 lines the substrate pocket.

Belongs to the alanine racemase family. Requires pyridoxal 5'-phosphate as cofactor.

The catalysed reaction is L-alanine = D-alanine. Its pathway is amino-acid biosynthesis; D-alanine biosynthesis; D-alanine from L-alanine: step 1/1. Catalyzes the interconversion of L-alanine and D-alanine. May also act on other amino acids. In Halorhodospira halophila (strain DSM 244 / SL1) (Ectothiorhodospira halophila (strain DSM 244 / SL1)), this protein is Alanine racemase (alr).